Reading from the N-terminus, the 432-residue chain is Serine/threonine-protein kinase CDG1 (432 aa).

S-palmitoyl cysteine attachment occurs at residues C4 and C6. A compositionally biased stretch (basic residues) spans 15 to 24 (LKDKSHKRSI). The segment at 15–47 (LKDKSHKRSIRNQTSSSSAQPAGTAKEVDSSSS) is disordered. Residues 25-35 (RNQTSSSSAQP) show a composition bias toward polar residues. Residues S44 and S47 each carry the phosphoserine modification. A Protein kinase domain is found at 74–354 (FRNESLIGRG…SQVVECLKYI (281 aa)). Residues 80-88 (IGRGGFGTV) and K102 contribute to the ATP site. A Phosphotyrosine modification is found at Y147. Residue D200 is the Proton acceptor of the active site. Phosphoserine occurs at positions 204 and 234. A phosphothreonine mark is found at T235 and T240. The residue at position 248 (Y248) is a Phosphotyrosine.

Belongs to the protein kinase superfamily. Ser/Thr protein kinase family. In terms of assembly, interacts with BSU1, BSL1 and BRI1. Phosphorylated at Ser-44, Ser-47 and Ser-234 by BRI1. Expressed at high levels in the stamen and pollen grains. Expressed at a very low level in vegetative tissues.

It localises to the cell membrane. The catalysed reaction is L-seryl-[protein] + ATP = O-phospho-L-seryl-[protein] + ADP + H(+). It catalyses the reaction L-threonyl-[protein] + ATP = O-phospho-L-threonyl-[protein] + ADP + H(+). With respect to regulation, activated by phosphorylation at Ser-234. Its function is as follows. Serine/threonine-protein kinase involved in the positive regulation of brassinosteroid (BR) signaling and plant growth. Mediates BR signal transduction from BRI1 receptor kinase to BSU1 phosphatase. After activation by phosphorylation at Ser-234 by BRI1, CDG1 phosphorylates BSU1 at 'Ser-764' in the phosphatase domain, increasing the ability of BSU1 to inactivate the negative regulator of BR signaling ASK7/BIN2 by dephosphorylation at 'Tyr-200'. The full kinase activity of CDG1 is required for its biological function. This is Serine/threonine-protein kinase CDG1 from Arabidopsis thaliana (Mouse-ear cress).